The chain runs to 675 residues: Polyphosphate kinase (675 aa).

Asn42 serves as a coordination point for ATP. 2 residues coordinate Mg(2+): Arg372 and Arg401. His431 functions as the Phosphohistidine intermediate in the catalytic mechanism. ATP is bound by residues Tyr464, Arg558, and His586.

The protein belongs to the polyphosphate kinase 1 (PPK1) family. Mg(2+) is required as a cofactor. In terms of processing, an intermediate of this reaction is the autophosphorylated ppk in which a phosphate is covalently linked to a histidine residue through a N-P bond.

It carries out the reaction [phosphate](n) + ATP = [phosphate](n+1) + ADP. Its function is as follows. Catalyzes the reversible transfer of the terminal phosphate of ATP to form a long-chain polyphosphate (polyP). The polypeptide is Polyphosphate kinase (Helicobacter pylori (strain ATCC 700392 / 26695) (Campylobacter pylori)).